The primary structure comprises 142 residues: Cell division protein SepF (142 aa).

Acidic residues predominate over residues 21-31 (ETTTVEEEREE). The tract at residues 21–46 (ETTTVEEEREEQESSHKRQPAISRTN) is disordered.

The protein belongs to the SepF family. Homodimer. Interacts with FtsZ.

It is found in the cytoplasm. Its function is as follows. Cell division protein that is part of the divisome complex and is recruited early to the Z-ring. Probably stimulates Z-ring formation, perhaps through the cross-linking of FtsZ protofilaments. Its function overlaps with FtsA. This Brevibacillus brevis (strain 47 / JCM 6285 / NBRC 100599) protein is Cell division protein SepF.